A 377-amino-acid polypeptide reads, in one-letter code: Cytochrome c peroxidase, mitochondrial (377 aa).

The N-terminal 17 residues, 1–17 (MSFRAPNLIRSAAGRRA), are a transit peptide targeting the mitochondrion. Histidine 138 (proton acceptor) is an active-site residue. Residue histidine 261 participates in heme b binding. The Tryptophan radical intermediate role is filled by tryptophan 277.

The protein belongs to the peroxidase family. Cytochrome c peroxidase subfamily. Forms a one-to-one complex with cytochrome c. The cofactor is heme b.

Its subcellular location is the mitochondrion matrix. It localises to the mitochondrion intermembrane space. It carries out the reaction 2 Fe(II)-[cytochrome c] + H2O2 + 2 H(+) = 2 Fe(III)-[cytochrome c] + 2 H2O. Functionally, destroys radicals which are normally produced within the cells and which are toxic to biological systems. The polypeptide is Cytochrome c peroxidase, mitochondrial (CCP1) (Cryptococcus neoformans var. neoformans serotype D (strain JEC21 / ATCC MYA-565) (Filobasidiella neoformans)).